The following is a 253-amino-acid chain: Major prion protein (253 aa).

Positions 1–22 (MANLGCWMLVLFVATWSDLGLC) are cleaved as a signal peptide. The interaction with GRB2, ERI3 and SYN1 stretch occupies residues 23 to 230 (KKRPKPGGWN…ESQAYYQRGS (208 aa)). The tract at residues 26–108 (PKPGGWNTGG…WNKPSKPKTN (83 aa)) is disordered. Repeat copies occupy residues 51–59 (PQGGGGWGQ), 60–67 (PHGGGWGQ), 68–75 (PHGGGWGQ), 76–83 (PHGGGWGQ), and 84–91 (PHGGGWGQ). The 5 X 8 AA tandem repeats of P-H-G-G-G-W-G-Q stretch occupies residues 51 to 91 (PQGGGGWGQPHGGGWGQPHGGGWGQPHGGGWGQPHGGGWGQ). The span at 52-95 (QGGGGWGQPHGGGWGQPHGGGWGQPHGGGWGQPHGGGWGQGGGT) shows a compositional bias: gly residues. 12 residues coordinate Cu(2+): histidine 61, glycine 62, glycine 63, histidine 69, glycine 70, glycine 71, histidine 77, glycine 78, glycine 79, histidine 85, glycine 86, and glycine 87. Residues cysteine 179 and cysteine 214 are joined by a disulfide bond. Residues asparagine 181 and asparagine 197 are each glycosylated (N-linked (GlcNAc...) asparagine). Serine 230 carries the GPI-anchor amidated serine lipid modification. Residues 231–253 (SMVLFSSPPVILLISFLIFLIVG) constitute a propeptide, removed in mature form.

This sequence belongs to the prion family. Monomer and homodimer. Has a tendency to aggregate into amyloid fibrils containing a cross-beta spine, formed by a steric zipper of superposed beta-strands. Soluble oligomers may represent an intermediate stage on the path to fibril formation. Copper binding may promote oligomerization. Interacts with GRB2, APP, ERI3/PRNPIP and SYN1. Mislocalized cytosolically exposed PrP interacts with MGRN1; this interaction alters MGRN1 subcellular location and causes lysosomal enlargement. Interacts with KIAA1191.

It is found in the cell membrane. Its subcellular location is the golgi apparatus. Its primary physiological function is unclear. Has cytoprotective activity against internal or environmental stresses. May play a role in neuronal development and synaptic plasticity. May be required for neuronal myelin sheath maintenance. May play a role in iron uptake and iron homeostasis. Soluble oligomers are toxic to cultured neuroblastoma cells and induce apoptosis (in vitro). Association with GPC1 (via its heparan sulfate chains) targets PRNP to lipid rafts. Also provides Cu(2+) or Zn(2+) for the ascorbate-mediated GPC1 deaminase degradation of its heparan sulfate side chains. This Hylobates lar (Lar gibbon) protein is Major prion protein (PRNP).